The sequence spans 282 residues: Pantothenate synthetase (282 aa).

30–37 (MGYLHEGH) is a binding site for ATP. The active-site Proton donor is the histidine 37. Residue glutamine 61 participates in (R)-pantoate binding. A beta-alanine-binding site is contributed by glutamine 61. An ATP-binding site is contributed by 147-150 (GMKD). Glutamine 153 is a binding site for (R)-pantoate. ATP is bound by residues valine 176 and 184–187 (KSSR).

It belongs to the pantothenate synthetase family. Homodimer.

The protein resides in the cytoplasm. It carries out the reaction (R)-pantoate + beta-alanine + ATP = (R)-pantothenate + AMP + diphosphate + H(+). Its pathway is cofactor biosynthesis; (R)-pantothenate biosynthesis; (R)-pantothenate from (R)-pantoate and beta-alanine: step 1/1. In terms of biological role, catalyzes the condensation of pantoate with beta-alanine in an ATP-dependent reaction via a pantoyl-adenylate intermediate. In Bacillus cereus (strain ATCC 10987 / NRS 248), this protein is Pantothenate synthetase.